The sequence spans 553 residues: uncharacterized protein (553 aa).

Residues 26–109 (RFEFVGWGSR…YDLLEKHYKE (84 aa)) form the SWIB/MDM2 domain. Residues 150–275 (AIVSDNIKLL…KAKKLHKDQT (126 aa)) enclose the Plus3 domain. Disordered regions lie at residues 335 to 357 (QNPE…SESP) and 447 to 482 (PVNN…ETLD). Basic and acidic residues predominate over residues 343–353 (EAHKSDNEQRL). Residues 447–461 (PVNNVDNGSQVQPNP) show a composition bias toward polar residues. Positions 466–480 (ELSDDDEDDNGDGET) are enriched in acidic residues. The region spanning 497 to 551 (KLNWLYKDPQGLVQGPFSLTQLKAWSDAEYFTKQFRVWMTGESMESAVLLTDVLR) is the GYF domain.

This is an uncharacterized protein from Arabidopsis thaliana (Mouse-ear cress).